A 70-amino-acid polypeptide reads, in one-letter code: Probable U6 snRNA-associated Sm-like protein (70 aa).

The 68-residue stretch at 3-70 folds into the Sm domain; it reads DPFCFLKMYL…ILFVGPRLLL (68 aa).

The protein belongs to the snRNP Sm proteins family.

It localises to the nucleus. Binds specifically to the 3'-terminal U-tract of U6 snRNA. In Encephalitozoon cuniculi (strain GB-M1) (Microsporidian parasite), this protein is Probable U6 snRNA-associated Sm-like protein.